The chain runs to 77 residues: Small ribosomal subunit protein uS17 (77 aa).

Belongs to the universal ribosomal protein uS17 family. As to quaternary structure, part of the 30S ribosomal subunit.

Functionally, one of the primary rRNA binding proteins, it binds specifically to the 5'-end of 16S ribosomal RNA. This Rickettsia akari (strain Hartford) protein is Small ribosomal subunit protein uS17.